The following is an 857-amino-acid chain: Facilitated trehalose transporter Tret1-1 (857 aa).

Disordered regions lie at residues 1–27 (MSGRDNRGAGGGGGGHQPLSNAMGKLK) and 92–203 (SFRP…KATS). Topologically, residues 1 to 392 (MSGRDNRGAG…VYRPTTNPIY (392 aa)) are cytoplasmic. The span at 134 to 143 (EIREHRDRQQ) shows a compositional bias: basic and acidic residues. Polar residues predominate over residues 171 to 181 (GNSNTNSNKAA). Phosphoserine is present on residues Ser-248, Ser-249, Ser-250, Ser-320, and Ser-322. Residues 327-346 (LTSRQHFQQQRSISTDSRKS) are disordered. Over residues 330–341 (RQHFQQQRSIST) the composition is skewed to polar residues. The chain crosses the membrane as a helical span at residues 393-413 (IWTQVLAALSVSLGSLVVGFV). At 414–440 (SAYTSPALVSMTDRNITSFEVTQDAGS) the chain is on the extracellular side. Asn-428 carries N-linked (GlcNAc...) asparagine glycosylation. A helical membrane pass occupies residues 441–461 (WVGGIMPLAALAGGITGGPLI). At 462-473 (EYLGRRNTILAT) the chain is on the cytoplasmic side. The chain crosses the membrane as a helical span at residues 474 to 494 (AVPFIVSSLLIACAVNVAMVL). Topologically, residues 495-497 (CGR) are extracellular. A helical membrane pass occupies residues 498-518 (FLAGFCVGIASLSLPVYLGET). Residues 519 to 528 (VQPEVRGTLG) lie on the Cytoplasmic side of the membrane. Residues 529 to 549 (LLPTAFGNIGILLCFVAGSFM) form a helical membrane-spanning segment. An N-linked (GlcNAc...) asparagine glycan is attached at Asn-550. Residues 550 to 552 (NWS) are Extracellular-facing. Residues 553–573 (MLAFLGAALPVPFLILMFLIP) form a helical membrane-spanning segment. Topologically, residues 574–636 (ETPRWFVGRG…ELLKLNNLKP (63 aa)) are cytoplasmic. A helical membrane pass occupies residues 637-657 (LSISLGLMFFQQFSGINAVIF). The Extracellular portion of the chain corresponds to 658 to 673 (YTVQIFKDAGSTIDGN). A helical transmembrane segment spans residues 674–694 (LCTIIVGIVNFLATFIGIVLI). Residues 695–700 (DRAGRK) lie on the Cytoplasmic side of the membrane. Residues 701–721 (ILLYVSDIAMVLTLFVLGGFF) form a helical membrane-spanning segment. Over 722-740 (YCKANGPDVSHLGWLPLTC) the chain is Extracellular. Residues 741-761 (FVIYILGFSLGFGPIPWLMMG) traverse the membrane as a helical segment. At 762-767 (EILPAK) the chain is on the cytoplasmic side. Residues 768–788 (IRGSAASVATAFNWFCTFVVT) form a helical membrane-spanning segment. At 789–801 (KTFQDLTVAMGAH) the chain is on the extracellular side. The chain crosses the membrane as a helical span at residues 802-822 (GAFWLFGAICFVGLFFVIIYV). Residues 823-857 (PETQGKTLEDIERKMMGRVRRMSSVANIKPLSFNM) lie on the Cytoplasmic side of the membrane. Phosphoserine occurs at positions 845 and 846.

It belongs to the major facilitator superfamily. Sugar transporter (TC 2.A.1.1) family. Trehalose transporter subfamily.

The protein resides in the cell membrane. Functionally, low-capacity facilitative transporter for trehalose. Does not transport maltose, sucrose or lactose. Mediates the bidirectional transfer of trehalose. Responsible for the transport of trehalose synthesized in the fat body and the incorporation of trehalose into other tissues that require a carbon source, thereby regulating trehalose levels in the hemolymph. The chain is Facilitated trehalose transporter Tret1-1 from Drosophila sechellia (Fruit fly).